The sequence spans 492 residues: Anthranilate synthase component 1 (492 aa).

Residues serine 48 and 273–275 (PYM) each bind L-tryptophan. 308 to 309 (GT) contributes to the chorismate binding site. Glutamate 335 is a Mg(2+) binding site. Chorismate is bound by residues tyrosine 423, arginine 443, 457 to 459 (GGG), and glycine 459. A Mg(2+)-binding site is contributed by glutamate 472.

This sequence belongs to the anthranilate synthase component I family. In terms of assembly, heterotetramer consisting of two non-identical subunits: a beta subunit (TrpG) and a large alpha subunit (TrpE). The cofactor is Mg(2+).

The enzyme catalyses chorismate + L-glutamine = anthranilate + pyruvate + L-glutamate + H(+). The protein operates within amino-acid biosynthesis; L-tryptophan biosynthesis; L-tryptophan from chorismate: step 1/5. With respect to regulation, feedback inhibited by tryptophan. Functionally, part of a heterotetrameric complex that catalyzes the two-step biosynthesis of anthranilate, an intermediate in the biosynthesis of L-tryptophan. In the first step, the glutamine-binding beta subunit (TrpG) of anthranilate synthase (AS) provides the glutamine amidotransferase activity which generates ammonia as a substrate that, along with chorismate, is used in the second step, catalyzed by the large alpha subunit of AS (TrpE) to produce anthranilate. In the absence of TrpG, TrpE can synthesize anthranilate directly from chorismate and high concentrations of ammonia. This is Anthranilate synthase component 1 from Pseudomonas aeruginosa (strain ATCC 15692 / DSM 22644 / CIP 104116 / JCM 14847 / LMG 12228 / 1C / PRS 101 / PAO1).